A 67-amino-acid polypeptide reads, in one-letter code: Bombesin (67 aa).

Positions 1-30 (MSLLPAVKVLPLGYLGIVLVFSLILRSAMV) are cleaved as a signal peptide. Residues 31 to 49 (DFIQDAGKLERIDTYKREA) constitute a propeptide that is removed on maturation. Pyrrolidone carboxylic acid is present on glutamine 50. The residue at position 64 (methionine 64) is a Methionine amide.

Belongs to the bombesin/neuromedin-B/ranatensin family. As to expression, expressed by the skin dorsal glands.

It localises to the secreted. Stimulates smooth muscle contraction in isolated rat stomach strip. The sequence is that of Bombesin from Sanguirana varians (Palawan frog).